The primary structure comprises 737 residues: Ribosome-releasing factor 2, mitochondrial (737 aa).

The transit peptide at 1–29 (MLKYALHSGGMPRNRLLRQLSAYIFRRSY) directs the protein to the mitochondrion. A tr-type G domain is found at 31 to 310 (SNIRNIGILA…AVNTYLPAPE (280 aa)). GTP-binding positions include 40-47 (AHIDAGKT), 104-108 (DTPGH), and 158-161 (NKMD).

This sequence belongs to the TRAFAC class translation factor GTPase superfamily. Classic translation factor GTPase family. EF-G/EF-2 subfamily.

Its subcellular location is the mitochondrion. Mitochondrial GTPase that mediates the disassembly of ribosomes from messenger RNA at the termination of mitochondrial protein biosynthesis. Not involved in the GTP-dependent ribosomal translocation step during translation elongation. In Drosophila persimilis (Fruit fly), this protein is Ribosome-releasing factor 2, mitochondrial.